The sequence spans 796 residues: Probable phosphoketolase (796 aa).

Belongs to the XFP family. Thiamine diphosphate serves as cofactor.

In Clostridium acetobutylicum (strain ATCC 824 / DSM 792 / JCM 1419 / IAM 19013 / LMG 5710 / NBRC 13948 / NRRL B-527 / VKM B-1787 / 2291 / W), this protein is Probable phosphoketolase.